Here is a 150-residue protein sequence, read N- to C-terminus: UPF0178 protein HCH_06960 (150 aa).

The protein belongs to the UPF0178 family.

This is UPF0178 protein HCH_06960 from Hahella chejuensis (strain KCTC 2396).